Reading from the N-terminus, the 526-residue chain is Cholesterol side-chain cleavage enzyme, mitochondrial (526 aa).

A mitochondrion-targeting transit peptide spans 1–36; it reads MLAKGLSLRSVLVKGCQPFLSPTWQGPVLSTGKGAG. The span at 30-41 shows a compositional bias: low complexity; sequence STGKGAGTSTSS. Positions 30 to 49 are disordered; it reads STGKGAGTSTSSPRSFNEIP. A heme-binding site is contributed by Cys-458.

Belongs to the cytochrome P450 family. As to quaternary structure, interacts with FDX1/adrenodoxin. Requires heme as cofactor.

The protein resides in the mitochondrion inner membrane. It carries out the reaction 6 reduced [adrenodoxin] + cholesterol + 3 O2 + 6 H(+) = 4-methylpentanal + pregnenolone + 6 oxidized [adrenodoxin] + 4 H2O. It catalyses the reaction 2 reduced [adrenodoxin] + cholesterol + O2 + 2 H(+) = (22R)-hydroxycholesterol + 2 oxidized [adrenodoxin] + H2O. The catalysed reaction is (22R)-hydroxycholesterol + 2 reduced [adrenodoxin] + O2 + 2 H(+) = (20R,22R)-20,22-dihydroxycholesterol + 2 oxidized [adrenodoxin] + H2O. The enzyme catalyses (20R,22R)-20,22-dihydroxycholesterol + 2 reduced [adrenodoxin] + O2 + 2 H(+) = 4-methylpentanal + pregnenolone + 2 oxidized [adrenodoxin] + 2 H2O. Its pathway is lipid metabolism; C21-steroid hormone metabolism. The protein operates within steroid metabolism; cholesterol metabolism. A cytochrome P450 monooxygenase that catalyzes the side-chain hydroxylation and cleavage of cholesterol to pregnenolone, the precursor of most steroid hormones. Catalyzes three sequential oxidation reactions of cholesterol, namely the hydroxylation at C22 followed with the hydroxylation at C20 to yield 20R,22R-hydroxycholesterol that is further cleaved between C20 and C22 to yield the C21-steroid pregnenolone and 4-methylpentanal. Mechanistically, uses molecular oxygen inserting one oxygen atom into a substrate and reducing the second into a water molecule. Two electrons are provided by NADPH via a two-protein mitochondrial transfer system comprising flavoprotein FDXR (adrenodoxin/ferredoxin reductase) and nonheme iron-sulfur protein FDX1 or FDX2 (adrenodoxin/ferredoxin). The sequence is that of Cholesterol side-chain cleavage enzyme, mitochondrial from Mus musculus (Mouse).